Here is a 263-residue protein sequence, read N- to C-terminus: GTP cyclohydrolase 1 type 2 homolog (263 aa).

Positions 76, 77, 113, 231, and 235 each coordinate a divalent metal cation.

The protein belongs to the GTP cyclohydrolase I type 2/NIF3 family. As to quaternary structure, homohexamer.

The protein is GTP cyclohydrolase 1 type 2 homolog of Deinococcus radiodurans (strain ATCC 13939 / DSM 20539 / JCM 16871 / CCUG 27074 / LMG 4051 / NBRC 15346 / NCIMB 9279 / VKM B-1422 / R1).